We begin with the raw amino-acid sequence, 116 residues long: CDKN2AIP N-terminal-like protein (116 aa).

At Met1 the chain carries N-acetylmethionine. The region spanning 24-116 is the XRN2-binding (XTBD) domain; the sequence is AEQFRSYSES…RSELMKKHQS (93 aa).

This sequence belongs to the CARF family. Interacts with XRN2; the interaction is direct.

This Homo sapiens (Human) protein is CDKN2AIP N-terminal-like protein (CDKN2AIPNL).